Reading from the N-terminus, the 1486-residue chain is Chromosome partition protein MukB (1486 aa).

34 to 41 (GGNGAGKS) is a binding site for ATP. Coiled-coil stretches lie at residues 326–418 (LEAD…QYNQ), 444–480 (LETF…QAYQ), and 509–603 (RHLA…RAPV). The flexible hinge stretch occupies residues 666–783 (PGGSEDQRLN…EVPLFGRAAR (118 aa)). 3 coiled-coil regions span residues 835–923 (EAEI…AKLE), 977–1115 (EMLS…TAKA), and 1209–1266 (VEAI…QNVS).

It belongs to the SMC family. MukB subfamily. In terms of assembly, homodimerization via its hinge domain. Binds to DNA via its C-terminal region. Interacts, and probably forms a ternary complex, with MukE and MukF via its C-terminal region. The complex formation is stimulated by calcium or magnesium. Interacts with tubulin-related protein FtsZ.

Its subcellular location is the cytoplasm. The protein resides in the nucleoid. Functionally, plays a central role in chromosome condensation, segregation and cell cycle progression. Functions as a homodimer, which is essential for chromosome partition. Involved in negative DNA supercoiling in vivo, and by this means organize and compact chromosomes. May achieve or facilitate chromosome segregation by condensation DNA from both sides of a centrally located replisome during cell division. The chain is Chromosome partition protein MukB from Shigella flexneri serotype 5b (strain 8401).